A 79-amino-acid chain; its full sequence is Short neurotoxin 1/5 (79 aa).

The N-terminal stretch at 1–21 (MKTLLLTLVMVTIMCLDLGYT) is a signal peptide. Intrachain disulfides connect cysteine 24–cysteine 41, cysteine 34–cysteine 59, cysteine 63–cysteine 71, and cysteine 72–cysteine 77.

The protein belongs to the three-finger toxin family. Short-chain subfamily. Type III alpha-neurotoxin sub-subfamily. In terms of tissue distribution, expressed by the venom gland.

The protein localises to the secreted. In terms of biological role, binds with high affinity to muscle nicotinic acetylcholine receptor (nAChR) and inhibit acetylcholine from binding to the receptor, thereby impairing neuromuscular transmission. Compete with the binding of alpha-bungarotoxin on muscle AChR (from Torpedo) with an IC(50) of 0.31 uM (SNTX1) and 3.1 uM (SNTX5). Is able of exerting muscle paralysis, spasms and increased respiration. The chain is Short neurotoxin 1/5 from Pseudonaja textilis (Eastern brown snake).